A 142-amino-acid polypeptide reads, in one-letter code: Large ribosomal subunit protein uL13 (142 aa).

Belongs to the universal ribosomal protein uL13 family. In terms of assembly, part of the 50S ribosomal subunit.

Functionally, this protein is one of the early assembly proteins of the 50S ribosomal subunit, although it is not seen to bind rRNA by itself. It is important during the early stages of 50S assembly. The polypeptide is Large ribosomal subunit protein uL13 (Histophilus somni (strain 129Pt) (Haemophilus somnus)).